A 95-amino-acid polypeptide reads, in one-letter code: Large ribosomal subunit protein eL37z (95 aa).

Residues Cys19, Cys22, Cys34, and Cys37 each coordinate Zn(2+). A C4-type zinc finger spans residues 19 to 37; that stretch reads CVRCGRRSFHIQKSRCSAC.

Belongs to the eukaryotic ribosomal protein eL37 family. Zn(2+) is required as a cofactor.

Functionally, binds to the 23S rRNA. The protein is Large ribosomal subunit protein eL37z (RPL37A) of Arabidopsis thaliana (Mouse-ear cress).